A 261-amino-acid chain; its full sequence is Zinc finger protein 664 (261 aa).

C2H2-type zinc fingers lie at residues 3-25, 31-53, 59-81, 87-109, 115-137, 143-165, 171-193, 199-221, and 227-249; these read YKCPMCREFFSERADLFMHQKVH, HKCDKCDKGFFHISELHIHWRDH, YKCDDCGKDFSTTTKLNRHKKIH, YKCYECGKAFNWSPHLQIHMRVH, YVCSECGRGFSNSSNLCMHQRVH, FKCEECGKAFRHTSSLCMHQRVH, YKCYECGKAFSQSSSLCIHQRVH, YRCCGCGKAFSQSSSLCIHQRVH, and FKCDECGKAFSQSTSLCIHQRVH. K257 is covalently cross-linked (Glycyl lysine isopeptide (Lys-Gly) (interchain with G-Cter in SUMO2)).

This sequence belongs to the krueppel C2H2-type zinc-finger protein family. In terms of tissue distribution, expressed in the organ of Corti, stria vascularis, auditory nerve and retina. Lower levels in the tongue, cerebellum, small intestine and kidney.

It is found in the nucleus. May be involved in transcriptional regulation. The polypeptide is Zinc finger protein 664 (ZNF664) (Cavia porcellus (Guinea pig)).